We begin with the raw amino-acid sequence, 147 residues long: Hordoindoline-B2 (147 aa).

The N-terminal stretch at 1–19 (MKTLFLLALLALVASTTSA) is a signal peptide. Positions 20–28 (QYSVGGGYN) are excised as a propeptide.

In terms of processing, five disulfide bonds are present. As to expression, found in endosperm and aleurone layer of developing kernels, but not in the embryo.

It is found in the membrane. The protein localises to the secreted. It localises to the extracellular space. In terms of biological role, acts as a membranotoxin, probably through its antibacterial and antifungal activities, contributing to the defense mechanism of the plant against predators. Forms monovalent cation-selective ion channels in membranes. Contributes to grain texture and hardness. This is Hordoindoline-B2 (HINB-2) from Hordeum vulgare (Barley).